Reading from the N-terminus, the 140-residue chain is Putative pre-16S rRNA nuclease (140 aa).

This sequence belongs to the YqgF nuclease family.

It is found in the cytoplasm. Functionally, could be a nuclease involved in processing of the 5'-end of pre-16S rRNA. This chain is Putative pre-16S rRNA nuclease, found in Enterococcus faecalis (strain ATCC 700802 / V583).